Consider the following 304-residue polypeptide: Putative S-adenosyl-L-methionine-dependent methyltransferase MAP_4189c (304 aa).

S-adenosyl-L-methionine-binding positions include aspartate 130 and 159 to 160; that span reads DL.

It belongs to the UPF0677 family.

Its function is as follows. Exhibits S-adenosyl-L-methionine-dependent methyltransferase activity. This chain is Putative S-adenosyl-L-methionine-dependent methyltransferase MAP_4189c, found in Mycolicibacterium paratuberculosis (strain ATCC BAA-968 / K-10) (Mycobacterium paratuberculosis).